The following is a 353-amino-acid chain: Chorismate synthase (353 aa).

Residues arginine 48 and arginine 54 each coordinate NADP(+). Residues 125 to 127, 238 to 239, glycine 278, 293 to 297, and arginine 319 contribute to the FMN site; these read RSS, NA, and KPTSS.

It belongs to the chorismate synthase family. As to quaternary structure, homotetramer. The cofactor is FMNH2.

The enzyme catalyses 5-O-(1-carboxyvinyl)-3-phosphoshikimate = chorismate + phosphate. The protein operates within metabolic intermediate biosynthesis; chorismate biosynthesis; chorismate from D-erythrose 4-phosphate and phosphoenolpyruvate: step 7/7. In terms of biological role, catalyzes the anti-1,4-elimination of the C-3 phosphate and the C-6 proR hydrogen from 5-enolpyruvylshikimate-3-phosphate (EPSP) to yield chorismate, which is the branch point compound that serves as the starting substrate for the three terminal pathways of aromatic amino acid biosynthesis. This reaction introduces a second double bond into the aromatic ring system. This Buchnera aphidicola subsp. Schizaphis graminum (strain Sg) protein is Chorismate synthase.